Consider the following 123-residue polypeptide: MHYCNKDIGSFGETIAVDYIKNCGYIILEKNFRCKLGEIDIIAKDKNFIVFIEVKTRYSYIYGSPSEAITFRKQNKIYKTAQLYIIKKAIHNKFYFRFDVIEVILNTLNSNYSVKLIKNAFQI.

It belongs to the UPF0102 family.

The sequence is that of UPF0102 protein CLM_2733 from Clostridium botulinum (strain Kyoto / Type A2).